A 374-amino-acid polypeptide reads, in one-letter code: tRNA-specific 2-thiouridylase MnmA (374 aa).

ATP-binding positions include 17–24 and Met43; that span reads GMSGGVDS. The interval 103–105 is interaction with target base in tRNA; it reads NPD. Cys108 serves as the catalytic Nucleophile. Residues Cys108 and Cys204 are joined by a disulfide bond. ATP is bound at residue Gly132. Residues 154 to 156 form an interaction with tRNA region; sequence KDQ. Cys204 (cysteine persulfide intermediate) is an active-site residue. The tract at residues 316–317 is interaction with tRNA; sequence RY.

The protein belongs to the MnmA/TRMU family.

The protein localises to the cytoplasm. The catalysed reaction is S-sulfanyl-L-cysteinyl-[protein] + uridine(34) in tRNA + AH2 + ATP = 2-thiouridine(34) in tRNA + L-cysteinyl-[protein] + A + AMP + diphosphate + H(+). Catalyzes the 2-thiolation of uridine at the wobble position (U34) of tRNA, leading to the formation of s(2)U34. In Pseudomonas putida (strain W619), this protein is tRNA-specific 2-thiouridylase MnmA.